We begin with the raw amino-acid sequence, 525 residues long: GMP synthase [glutamine-hydrolyzing] (525 aa).

Residues 8 to 207 (KILILDFGSQ…ALDICQCEAN (200 aa)) form the Glutamine amidotransferase type-1 domain. Cys85 (nucleophile) is an active-site residue. Active-site residues include His181 and Glu183. The 193-residue stretch at 208–400 (WKPSSIIEDA…LGLPYNMLYR (193 aa)) folds into the GMPS ATP-PPase domain. An ATP-binding site is contributed by 235–241 (SGGVDSS).

As to quaternary structure, homodimer.

The enzyme catalyses XMP + L-glutamine + ATP + H2O = GMP + L-glutamate + AMP + diphosphate + 2 H(+). The protein operates within purine metabolism; GMP biosynthesis; GMP from XMP (L-Gln route): step 1/1. Catalyzes the synthesis of GMP from XMP. The chain is GMP synthase [glutamine-hydrolyzing] from Shewanella loihica (strain ATCC BAA-1088 / PV-4).